We begin with the raw amino-acid sequence, 142 residues long: Large ribosomal subunit protein uL13 (142 aa).

This sequence belongs to the universal ribosomal protein uL13 family. Part of the 50S ribosomal subunit.

Its function is as follows. This protein is one of the early assembly proteins of the 50S ribosomal subunit, although it is not seen to bind rRNA by itself. It is important during the early stages of 50S assembly. The sequence is that of Large ribosomal subunit protein uL13 from Buchnera aphidicola subsp. Schizaphis graminum (strain Sg).